The sequence spans 553 residues: Telomere repeat-binding protein 2 (553 aa).

Residues 147–170 are disordered; that stretch reads SSTEVGACGNGSPNESRDDVNLFS. The Ubiquitin-like domain maps to 285–364; it reads VKLRIKSFRV…HLDSLGFSLE (80 aa). Residues 394 to 413 form a disordered region; that stretch reads ALDSSHEPEPSPADSFGKLG. In terms of domain architecture, HTH myb-type spans 448-507; sequence AQRRIRRPFSVTEVEALVQAVEKLGTGRWRDVKVRAFEDADHRTYVDLKDKWKTLVHTAR. Positions 476–503 form a DNA-binding region, H-T-H motif; the sequence is WRDVKVRAFEDADHRTYVDLKDKWKTLV.

Homodimer and heterodimer with TRP1. Interacts with SNL1. As to expression, expressed ubiquitously. Highest expression in flowers and leaves.

It localises to the nucleus. Functionally, binds specifically to the plant telomeric double-stranded DNA sequences. At least 2 repeats of telomeric sequences are required for binding. Induces DNA bending. This Arabidopsis thaliana (Mouse-ear cress) protein is Telomere repeat-binding protein 2 (TRP2).